A 524-amino-acid chain; its full sequence is Sexual development regulator velC (524 aa).

4 disordered regions span residues 114-195 (NRVL…PVHS), 322-349 (PGSG…MSSY), 380-413 (VDEE…HRFR), and 503-524 (GMGK…ARVE). Composition is skewed to polar residues over residues 131–153 (TTGS…ENAG) and 178–195 (LDSQ…PVHS). The region spanning 248 to 500 (SSSSRYRLFI…ELGFVELKTR (253 aa)) is the Velvet domain. The span at 393 to 402 (PSSTDDSTYD) shows a compositional bias: polar residues.

It belongs to the velvet family. VelC subfamily. As to quaternary structure, interacts with vosA.

The protein localises to the nucleus. Functionally, velvet-domain-containing protein that acts as a positive regulator of sexual development. Positively regulates the production of the sexual fruiting bodies called cleistothecia. This is Sexual development regulator velC from Emericella nidulans (strain FGSC A4 / ATCC 38163 / CBS 112.46 / NRRL 194 / M139) (Aspergillus nidulans).